The sequence spans 321 residues: Aspartate carbamoyltransferase catalytic subunit (321 aa).

Residues arginine 65 and threonine 66 each coordinate carbamoyl phosphate. Residue lysine 93 participates in L-aspartate binding. Carbamoyl phosphate-binding residues include arginine 115, histidine 143, and glutamine 146. Residues arginine 176 and arginine 230 each coordinate L-aspartate. Carbamoyl phosphate is bound by residues glycine 271 and proline 272.

Belongs to the aspartate/ornithine carbamoyltransferase superfamily. ATCase family. In terms of assembly, heterododecamer (2C3:3R2) of six catalytic PyrB chains organized as two trimers (C3), and six regulatory PyrI chains organized as three dimers (R2).

It carries out the reaction carbamoyl phosphate + L-aspartate = N-carbamoyl-L-aspartate + phosphate + H(+). Its pathway is pyrimidine metabolism; UMP biosynthesis via de novo pathway; (S)-dihydroorotate from bicarbonate: step 2/3. Functionally, catalyzes the condensation of carbamoyl phosphate and aspartate to form carbamoyl aspartate and inorganic phosphate, the committed step in the de novo pyrimidine nucleotide biosynthesis pathway. The chain is Aspartate carbamoyltransferase catalytic subunit from Bartonella henselae (strain ATCC 49882 / DSM 28221 / CCUG 30454 / Houston 1) (Rochalimaea henselae).